Consider the following 224-residue polypeptide: uncharacterized protein (224 aa).

The Matrin-type zinc finger occupies 11-42 (YYCKYCQIFVKDTPFARRSHEQTYKHQDAIKK). Residues 67 to 80 (ATATTASAVSSELA) are compositionally biased toward low complexity. 2 disordered regions span residues 67 to 158 (ATAT…RNRE) and 172 to 224 (VKPK…YDQS). Residues 87–98 (KEHPKLRPSKKK) are compositionally biased toward basic residues. The segment covering 108-122 (TSSTETDTISTTHTS) has biased composition (low complexity). Residues 175-199 (KNLDKVPKLAENEGNKSLESKESNE) are compositionally biased toward basic and acidic residues. Positions 203–216 (VFKKKKSGKLRTKS) are enriched in basic residues.

It is found in the nucleus. It localises to the nucleolus. This is an uncharacterized protein from Schizosaccharomyces pombe (strain 972 / ATCC 24843) (Fission yeast).